The primary structure comprises 380 residues: Spore coat protein B (380 aa).

The interval 224–364 (GPKGSYKKED…SSGKQKEDYS (141 aa)) is disordered. A compositionally biased stretch (basic and acidic residues) spans 229–248 (YKKEDQKNEQNQEDNNDKDS). 3 stretches are compositionally biased toward low complexity: residues 275 to 288 (SKSG…SSSK), 296 to 315 (SSDY…SSSK), and 338 to 356 (SSDY…IKSS).

In Bacillus subtilis (strain 168), this protein is Spore coat protein B (cotB).